The primary structure comprises 290 residues: Glucuronoxylan 4-O-methyltransferase 2 (290 aa).

Residues 8–28 traverse the membrane as a helical segment; the sequence is FISSKLIFICCSILVLFILFL.

It belongs to the methyltransferase superfamily. In terms of tissue distribution, expressed in roots, rosette leaves and stems.

It localises to the golgi apparatus membrane. It catalyses the reaction glucuronoxylan D-glucuronate + n S-adenosyl-L-methionine = glucuronoxylan 4-O-methyl-D-glucuronate + n S-adenosyl-L-homocysteine + n H(+). Functionally, methyltransferase catalyzing 4-O-methylation of glucuronic acid side chains on xylan. The polypeptide is Glucuronoxylan 4-O-methyltransferase 2 (GXM2) (Arabidopsis thaliana (Mouse-ear cress)).